A 159-amino-acid chain; its full sequence is SsrA-binding protein (159 aa).

A compositionally biased stretch (basic and acidic residues) spans 133–147 (KRQDLAKRDAQREMA). Residues 133–159 (KRQDLAKRDAQREMARAAGRRSKGMDD) are disordered. Residues 150–159 (AGRRSKGMDD) are compositionally biased toward basic residues.

Belongs to the SmpB family.

Its subcellular location is the cytoplasm. Required for rescue of stalled ribosomes mediated by trans-translation. Binds to transfer-messenger RNA (tmRNA), required for stable association of tmRNA with ribosomes. tmRNA and SmpB together mimic tRNA shape, replacing the anticodon stem-loop with SmpB. tmRNA is encoded by the ssrA gene; the 2 termini fold to resemble tRNA(Ala) and it encodes a 'tag peptide', a short internal open reading frame. During trans-translation Ala-aminoacylated tmRNA acts like a tRNA, entering the A-site of stalled ribosomes, displacing the stalled mRNA. The ribosome then switches to translate the ORF on the tmRNA; the nascent peptide is terminated with the 'tag peptide' encoded by the tmRNA and targeted for degradation. The ribosome is freed to recommence translation, which seems to be the essential function of trans-translation. The chain is SsrA-binding protein from Salinispora arenicola (strain CNS-205).